Here is a 261-residue protein sequence, read N- to C-terminus: Mediator of RNA polymerase II transcription subunit 7 (261 aa).

Disordered regions lie at residues 1–56 (MADA…PTEL), 99–121 (GITQ…SEPS), and 223–244 (DVDA…VSEE). Residues 23-46 (FTPDNLKKLDEIKKNASKGEDGKP) are compositionally biased toward basic and acidic residues. Residues 234–244 (NDTKKPNVSEE) show a composition bias toward basic and acidic residues.

It belongs to the Mediator complex subunit 7 family. Component of the Mediator complex.

The protein resides in the nucleus. Its function is as follows. Component of the Mediator complex, a coactivator involved in the regulated transcription of nearly all RNA polymerase II-dependent genes. Mediator functions as a bridge to convey information from gene-specific regulatory proteins to the basal RNA polymerase II transcription machinery. Mediator is recruited to promoters by direct interactions with regulatory proteins and serves as a scaffold for the assembly of a functional preinitiation complex with RNA polymerase II and the general transcription factors. The polypeptide is Mediator of RNA polymerase II transcription subunit 7 (med7) (Aspergillus oryzae (strain ATCC 42149 / RIB 40) (Yellow koji mold)).